Consider the following 350-residue polypeptide: Hydroxymethylglutaryl-CoA synthase (350 aa).

Glutamate 83 acts as the Proton donor/acceptor in catalysis. Cysteine 115 acts as the Acyl-thioester intermediate in catalysis. Cysteine 115 and threonine 156 together coordinate (3S)-3-hydroxy-3-methylglutaryl-CoA. Arginine 204 contributes to the CoA binding site. Residues threonine 206 and histidine 239 each coordinate (3S)-3-hydroxy-3-methylglutaryl-CoA. The Proton donor/acceptor role is filled by histidine 239. Lysine 244 contacts CoA. Residues asparagine 271 and serine 301 each contribute to the (3S)-3-hydroxy-3-methylglutaryl-CoA site.

Belongs to the thiolase-like superfamily. Archaeal HMG-CoA synthase family. As to quaternary structure, interacts with acetoacetyl-CoA thiolase that catalyzes the precedent step in the pathway and with a DUF35 protein. The acetoacetyl-CoA thiolase/HMG-CoA synthase complex channels the intermediate via a fused CoA-binding site, which allows for efficient coupling of the endergonic thiolase reaction with the exergonic HMGCS reaction.

The catalysed reaction is acetoacetyl-CoA + acetyl-CoA + H2O = (3S)-3-hydroxy-3-methylglutaryl-CoA + CoA + H(+). Its pathway is metabolic intermediate biosynthesis; (R)-mevalonate biosynthesis; (R)-mevalonate from acetyl-CoA: step 2/3. Catalyzes the condensation of acetyl-CoA with acetoacetyl-CoA to form 3-hydroxy-3-methylglutaryl-CoA (HMG-CoA). Functions in the mevalonate (MVA) pathway leading to isopentenyl diphosphate (IPP), a key precursor for the biosynthesis of isoprenoid compounds that are building blocks of archaeal membrane lipids. In Pyrococcus furiosus (strain ATCC 43587 / DSM 3638 / JCM 8422 / Vc1), this protein is Hydroxymethylglutaryl-CoA synthase.